The chain runs to 79 residues: Morintide mO2 (79 aa).

An N-terminal signal peptide occupies residues 1 to 20 (MAKLSFLSLFLLCLVATATA). Positions 21–63 (QNCGRQAGNRACANGLCCSQYGFCGSTSEYCSRANGCQSNCRG) constitute a Chitin-binding type-1 domain. 4 disulfides stabilise this stretch: Cys23–Cys38, Cys32–Cys44, Cys37–Cys51, and Cys57–Cys61. A propeptide spanning residues 64 to 79 (GGGAGGAGGGAGGGSP) is cleaved from the precursor.

As to expression, leaves (at protein level).

Chitin-binding protein which functions in defense against chitin-containing fungal pathogens. This chain is Morintide mO2, found in Moringa oleifera (Horseradish tree).